We begin with the raw amino-acid sequence, 940 residues long: PTS system glucose-specific EIICBA component (940 aa).

One can recognise a PTS EIIC type-1; first part domain in the interval methionine 1–glycine 284. 5 helical membrane-spanning segments follow: residues leucine 43–isoleucine 63, glycine 83–phenylalanine 103, phenylalanine 112–phenylalanine 132, valine 175–isoleucine 195, and phenylalanine 209–tryptophan 229. Residues glycine 285–serine 478 are unknown. In terms of domain architecture, PTS EIIC type-1; second part spans leucine 479–glycine 630. A run of 5 helical transmembrane segments spans residues glycine 487–alanine 507, alanine 515–phenylalanine 535, phenylalanine 537–valine 557, isoleucine 564–glycine 584, and leucine 598–isoleucine 618. Residues glutamine 661 to tryptophan 743 enclose the PTS EIIB type-1 domain. Cysteine 683 acts as the Phosphocysteine intermediate; for EIIB activity in catalysis. The PTS EIIA type-1 domain maps to aspartate 794–lysine 907. Catalysis depends on histidine 847, which acts as the Tele-phosphohistidine intermediate; for EIIA activity.

The protein resides in the cell membrane. The catalysed reaction is N(pros)-phospho-L-histidyl-[protein] + D-glucose(out) = D-glucose 6-phosphate(in) + L-histidyl-[protein]. In terms of biological role, the phosphoenolpyruvate-dependent sugar phosphotransferase system (sugar PTS), a major carbohydrate active transport system, catalyzes the phosphorylation of incoming sugar substrates concomitantly with their translocation across the cell membrane. This system is involved in glucose transport. The protein is PTS system glucose-specific EIICBA component (ptsG) of Mycoplasma pneumoniae (strain ATCC 29342 / M129 / Subtype 1) (Mycoplasmoides pneumoniae).